The primary structure comprises 352 residues: Biotin synthase (352 aa).

One can recognise a Radical SAM core domain in the interval 44 to 262 (NRVQVSTLLS…LAVARIMMPK (219 aa)). [4Fe-4S] cluster contacts are provided by Cys-59, Cys-63, and Cys-66. Cys-103, Cys-134, Cys-194, and Arg-266 together coordinate [2Fe-2S] cluster.

It belongs to the radical SAM superfamily. Biotin synthase family. Homodimer. It depends on [4Fe-4S] cluster as a cofactor. [2Fe-2S] cluster serves as cofactor.

The catalysed reaction is (4R,5S)-dethiobiotin + (sulfur carrier)-SH + 2 reduced [2Fe-2S]-[ferredoxin] + 2 S-adenosyl-L-methionine = (sulfur carrier)-H + biotin + 2 5'-deoxyadenosine + 2 L-methionine + 2 oxidized [2Fe-2S]-[ferredoxin]. It functions in the pathway cofactor biosynthesis; biotin biosynthesis; biotin from 7,8-diaminononanoate: step 2/2. Catalyzes the conversion of dethiobiotin (DTB) to biotin by the insertion of a sulfur atom into dethiobiotin via a radical-based mechanism. The protein is Biotin synthase of Pseudomonas paraeruginosa (strain DSM 24068 / PA7) (Pseudomonas aeruginosa (strain PA7)).